We begin with the raw amino-acid sequence, 863 residues long: Ribosomal protein S6 kinase alpha-5 (863 aa).

A compositionally biased stretch (gly residues) spans 1-21 (MEGEGGGSGGAGTSGDSGDGG). Residues 1–22 (MEGEGGGSGGAGTSGDSGDGGE) are disordered. One can recognise a Protein kinase 1 domain in the interval 48 to 317 (FELLKVLGTG…AEEIKEHLFF (270 aa)). ATP-binding positions include 54–62 (LGTGAYGKV) and Lys-80. Asp-176 functions as the Proton acceptor in the catalytic mechanism. Phosphoserine; by autocatalysis is present on Ser-211. The 69-residue stretch at 318-386 (EKIKWDDLAA…VAPSILFKRN (69 aa)) folds into the AGC-kinase C-terminal domain. Ser-359 carries the phosphoserine; by MAPK1, MAPK3 and MAPK14 modification. Phosphoserine; by autocatalysis occurs at positions 375 and 380. The Protein kinase 2 domain occupies 428 to 675 (DKPLGEGSFS…SCDLWSLGVI (248 aa)). Residues 431 to 440 (LGEGSFSICR) and Lys-454 each bind ATP. Asp-608 (proton acceptor) is an active-site residue. At Thr-645 the chain carries Phosphothreonine; by MAPK1, MAPK3 and MAPK14. Residues Ser-711, Ser-721, Ser-755, and Ser-759 each carry the phosphoserine modification. A Phosphothreonine modification is found at Thr-764. Positions 805–863 (AKRRKMKRTSTSTETRSSSSESSRSSSSQSHGKTTPTKTLQPSNPTEGSNPDTLFQFSD) are disordered. Low complexity predominate over residues 813 to 832 (TSTSTETRSSSSESSRSSSS). Residues Ser-814, Ser-816, and Ser-822 each carry the phosphoserine; by autocatalysis modification. Residues 833-863 (QSHGKTTPTKTLQPSNPTEGSNPDTLFQFSD) are compositionally biased toward polar residues. A Phosphoserine modification is found at Ser-862.

It belongs to the protein kinase superfamily. AGC Ser/Thr protein kinase family. S6 kinase subfamily. In terms of assembly, forms a complex with either MAPK1/ERK2 or MAPK3/ERK1 in quiescent cells which transiently dissociates following mitogenic stimulation. Also associates with MAPK14/p38-alpha. Activated RPS6KA5 associates with and phosphorylates the NF-kappa-B p65 subunit RELA. Interacts with CREBBP and EP300. Mg(2+) serves as cofactor. In terms of processing, ser-375 and Thr-645 phosphorylation is required for kinase activity. Ser-375 and Ser-211 are autophosphorylated by the C-terminal kinase domain, and their phosphorylation is essential for the catalytic activity of the N-terminal kinase domain. Phosphorylated at Ser-359, Thr-645 and Thr-764 by MAPK1/ERK2, MAPK3/ERK1 and MAPK14/p38-alpha. Autophosphorylated at Ser-814, Ser-816 and Ser-822 by the N-terminal kinase domain. Ubiquitinated.

It is found in the nucleus. It carries out the reaction L-seryl-[protein] + ATP = O-phospho-L-seryl-[protein] + ADP + H(+). The catalysed reaction is L-threonyl-[protein] + ATP = O-phospho-L-threonyl-[protein] + ADP + H(+). Its activity is regulated as follows. Activated by phosphorylation at Ser-359, Thr-645 and Thr-764 by MAPK1/ERK2, MAPK3/ERK1 and MAPK14/p38-alpha, and by further autophosphorylation of Ser-211, Ser-375 and Ser-380 by the activated C-terminal kinase domain. The active N-terminal kinase domain finally phosphorylates downstream substrates, as well as Ser-814, Ser-816 and Ser-822 in its own C-terminal region. Serine/threonine-protein kinase that is required for the mitogen or stress-induced phosphorylation of the transcription factors CREB1 and ATF1 and for the regulation of the transcription factors RELA, STAT3 and ETV1/ER81, and that contributes to gene activation by histone phosphorylation and functions in the regulation of inflammatory genes. Phosphorylates CREB1 and ATF1 in response to mitogenic or stress stimuli such as UV-C irradiation, epidermal growth factor (EGF) and anisomycin. Plays an essential role in the control of RELA transcriptional activity in response to TNF and upon glucocorticoid, associates in the cytoplasm with the glucocorticoid receptor NR3C1 and contributes to RELA inhibition and repression of inflammatory gene expression. In skeletal myoblasts is required for phosphorylation of RELA at 'Ser-276' during oxidative stress. In erythropoietin-stimulated cells, is necessary for the 'Ser-727' phosphorylation of STAT3 and regulation of its transcriptional potential. Phosphorylates ETV1/ER81 at 'Ser-191' and 'Ser-216', and thereby regulates its ability to stimulate transcription, which may be important during development and breast tumor formation. Directly represses transcription via phosphorylation of 'Ser-1' of histone H2A. Phosphorylates 'Ser-10' of histone H3 in response to mitogenics, stress stimuli and EGF, which results in the transcriptional activation of several immediate early genes, including proto-oncogenes c-fos/FOS and c-jun/JUN. May also phosphorylate 'Ser-28' of histone H3. Mediates the mitogen- and stress-induced phosphorylation of high mobility group protein 1 (HMGN1/HMG14). In lipopolysaccharide-stimulated primary macrophages, acts downstream of the Toll-like receptor TLR4 to limit the production of pro-inflammatory cytokines. Functions probably by inducing transcription of the MAP kinase phosphatase DUSP1 and the anti-inflammatory cytokine interleukin 10 (IL10), via CREB1 and ATF1 transcription factors. Plays a role in neuronal cell death by mediating the downstream effects of excitotoxic injury. Phosphorylates TRIM7 at 'Ser-106' in response to growth factor signaling via the MEK/ERK pathway, thereby stimulating its ubiquitin ligase activity. In Mus musculus (Mouse), this protein is Ribosomal protein S6 kinase alpha-5 (Rps6ka5).